The chain runs to 278 residues: Formamidopyrimidine-DNA glycosylase (278 aa).

P2 functions as the Schiff-base intermediate with DNA in the catalytic mechanism. E3 functions as the Proton donor in the catalytic mechanism. K58 serves as the catalytic Proton donor; for beta-elimination activity. Positions 91, 109, and 158 each coordinate DNA. The FPG-type zinc-finger motif lies at 243–277 (KVYDRKGLPCKVCKTPISQMVQGQRTTYFCSQCQK). Residue R267 is the Proton donor; for delta-elimination activity of the active site.

This sequence belongs to the FPG family. As to quaternary structure, monomer. Zn(2+) is required as a cofactor.

It carries out the reaction Hydrolysis of DNA containing ring-opened 7-methylguanine residues, releasing 2,6-diamino-4-hydroxy-5-(N-methyl)formamidopyrimidine.. The enzyme catalyses 2'-deoxyribonucleotide-(2'-deoxyribose 5'-phosphate)-2'-deoxyribonucleotide-DNA = a 3'-end 2'-deoxyribonucleotide-(2,3-dehydro-2,3-deoxyribose 5'-phosphate)-DNA + a 5'-end 5'-phospho-2'-deoxyribonucleoside-DNA + H(+). Functionally, involved in base excision repair of DNA damaged by oxidation or by mutagenic agents. Acts as a DNA glycosylase that recognizes and removes damaged bases. Has a preference for oxidized purines, such as 7,8-dihydro-8-oxoguanine (8-oxoG). Has AP (apurinic/apyrimidinic) lyase activity and introduces nicks in the DNA strand. Cleaves the DNA backbone by beta-delta elimination to generate a single-strand break at the site of the removed base with both 3'- and 5'-phosphates. In Polynucleobacter necessarius subsp. necessarius (strain STIR1), this protein is Formamidopyrimidine-DNA glycosylase.